Reading from the N-terminus, the 251-residue chain is NADH-quinone oxidoreductase subunit B (251 aa).

[4Fe-4S] cluster-binding residues include Cys-38, Cys-39, Cys-104, and Cys-134. The tract at residues Arg-208–Ala-251 is disordered. Over residues Gly-242–Ala-251 the composition is skewed to basic and acidic residues.

It belongs to the complex I 20 kDa subunit family. NDH-1 is composed of 14 different subunits. Subunits NuoB, C, D, E, F, and G constitute the peripheral sector of the complex. It depends on [4Fe-4S] cluster as a cofactor.

It is found in the cell membrane. The enzyme catalyses a quinone + NADH + 5 H(+)(in) = a quinol + NAD(+) + 4 H(+)(out). Its function is as follows. NDH-1 shuttles electrons from NADH, via FMN and iron-sulfur (Fe-S) centers, to quinones in the respiratory chain. The immediate electron acceptor for the enzyme in this species is believed to be a menaquinone. Couples the redox reaction to proton translocation (for every two electrons transferred, four hydrogen ions are translocated across the cytoplasmic membrane), and thus conserves the redox energy in a proton gradient. The sequence is that of NADH-quinone oxidoreductase subunit B from Rubrobacter xylanophilus (strain DSM 9941 / JCM 11954 / NBRC 16129 / PRD-1).